Here is a 652-residue protein sequence, read N- to C-terminus: MSQIHKHPIPAAIAEHALITPEKYQHYYQQSVQNPDEFWGEQGKIIDWIKPYKTVKNTSFDPGHVSIRWFEDGTLNLAANCLDRHLAERGDQTAIIWEGDDPNQSKTVTYKQLHHDVCQFANVLKSLGVKKGDVVAIYMPMVPEAAVAMLACARIGAVHSVIFGGFSPDAVAGRIIDSHSKLVITADEGIRAGRAIPLKKNVDEALKNPAITSIKNVVVFQRTGNASYWEDGRDVWWHDLIKEASADCPPEEMNAEDPLFILYTSGSTGKPKGVVHTTGGYLVYAALTFKYVFDYHPGDIYWCTADVGWVTGHSYLLYGPLACGAITLMFEGVPNYPGVNRLSQVVDKHKVNILYTAPTAIRALMAEGDKAIEGTKRDSLRIMGSVGEPINPEAWEWYYNKIGNSKCPIVDTWWQTETGGFMITPLPGATELKAGSATRPFFGVQPALVDNLGNPQEGVAEGNLVITDSWPGQARTLFGDHERFEQTYFSTFKGMYFSGDGARRDEDGYYWITGRVDDVLNVSGHRLGTAEIESALVAHPKIAEAAVVGVPHNIKGQAIYAYITLNHGEEPTPELYTEVRNWVRKEIGPLATPDILHWTDSLPKTRSGKIMRRILRKIATGDTSNLGDTSTLADPSVVEKLLEEKQSMQTPS.

Residues 191–194 (RAGR), Thr-311, and Asn-335 each bind CoA. ATP contacts are provided by residues 387–389 (GEP), 411–416 (DTWWQT), Asp-500, and Arg-515. CoA is bound at residue Ser-523. Arg-526 is an ATP binding site. Mg(2+) contacts are provided by Val-537, His-539, and Ile-542. A CoA-binding site is contributed by Arg-584. At Lys-609 the chain carries N6-acetyllysine.

It belongs to the ATP-dependent AMP-binding enzyme family. Mg(2+) serves as cofactor. In terms of processing, acetylated. Deacetylation by the SIR2-homolog deacetylase activates the enzyme.

The enzyme catalyses acetate + ATP + CoA = acetyl-CoA + AMP + diphosphate. Functionally, catalyzes the conversion of acetate into acetyl-CoA (AcCoA), an essential intermediate at the junction of anabolic and catabolic pathways. Acs undergoes a two-step reaction. In the first half reaction, Acs combines acetate with ATP to form acetyl-adenylate (AcAMP) intermediate. In the second half reaction, it can then transfer the acetyl group from AcAMP to the sulfhydryl group of CoA, forming the product AcCoA. Enables the cell to use acetate during aerobic growth to generate energy via the TCA cycle, and biosynthetic compounds via the glyoxylate shunt. Acetylates CheY, the response regulator involved in flagellar movement and chemotaxis. The polypeptide is Acetyl-coenzyme A synthetase (Yersinia pestis).